Consider the following 257-residue polypeptide: Microfibril-associated glycoprotein 4 (257 aa).

The first 22 residues, Met-1 to Pro-22, serve as a signal peptide directing secretion. Residues Arg-28–Asp-30 carry the Cell attachment site motif. The region spanning Lys-34–Ala-257 is the Fibrinogen C-terminal domain. Residues Asn-89 and Asn-139 are each glycosylated (N-linked (GlcNAc...) asparagine).

As to quaternary structure, homodimer. Can also form higher oligomers. Interacts with FBN1, FBN2 and LOX. Interacts with COL1A1 in a Ca (2+)-dependent manner. Interacts with ELN in a Ca (2+)-dependent manner; this interaction promotes ELN self-assembly.

It localises to the secreted. The protein resides in the extracellular space. Its subcellular location is the extracellular matrix. Could be involved in calcium-dependent cell adhesion or intercellular interactions. May contribute to the elastic fiber assembly and/or maintenance. In Mus musculus (Mouse), this protein is Microfibril-associated glycoprotein 4 (Mfap4).